The chain runs to 59 residues: Putative antitoxin AF_1090 (59 aa).

It belongs to the UPF0165 family.

Possibly the antitoxin component of a type II toxin-antitoxin (TA) system. This Archaeoglobus fulgidus (strain ATCC 49558 / DSM 4304 / JCM 9628 / NBRC 100126 / VC-16) protein is Putative antitoxin AF_1090.